The primary structure comprises 392 residues: Tryptophan 2,3-dioxygenase (392 aa).

Substrate-binding positions include 57–61 and arginine 128; that span reads FIVTH. Histidine 313 lines the heme pocket. Residue threonine 328 coordinates substrate.

The protein belongs to the tryptophan 2,3-dioxygenase family. Homotetramer. Dimer of dimers. The cofactor is heme.

It catalyses the reaction L-tryptophan + O2 = N-formyl-L-kynurenine. It participates in amino-acid degradation; L-tryptophan degradation via kynurenine pathway; L-kynurenine from L-tryptophan: step 1/2. The protein operates within pigment biosynthesis; ommochrome biosynthesis. Heme-dependent dioxygenase that catalyzes the oxidative cleavage of the L-tryptophan (L-Trp) pyrrole ring and converts L-tryptophan to N-formyl-L-kynurenine. Catalyzes the oxidative cleavage of the indole moiety. The sequence is that of Tryptophan 2,3-dioxygenase from Anopheles gambiae (African malaria mosquito).